A 554-amino-acid polypeptide reads, in one-letter code: Glucose-6-phosphate isomerase (554 aa).

The active-site Proton donor is E359. Active-site residues include H390 and K518.

It belongs to the GPI family.

The protein localises to the cytoplasm. The catalysed reaction is alpha-D-glucose 6-phosphate = beta-D-fructose 6-phosphate. It participates in carbohydrate biosynthesis; gluconeogenesis. The protein operates within carbohydrate degradation; glycolysis; D-glyceraldehyde 3-phosphate and glycerone phosphate from D-glucose: step 2/4. Its function is as follows. Catalyzes the reversible isomerization of glucose-6-phosphate to fructose-6-phosphate. The sequence is that of Glucose-6-phosphate isomerase from Pseudomonas fluorescens (strain Pf0-1).